The sequence spans 122 residues: uncharacterized protein (122 aa).

It is found in the mitochondrion. This is an uncharacterized protein from Arabidopsis thaliana (Mouse-ear cress).